Here is a 445-residue protein sequence, read N- to C-terminus: Phosphoglucosamine mutase (445 aa).

Serine 102 serves as the catalytic Phosphoserine intermediate. 4 residues coordinate Mg(2+): serine 102, aspartate 241, aspartate 243, and aspartate 245. Serine 102 is modified (phosphoserine).

Belongs to the phosphohexose mutase family. The cofactor is Mg(2+). Post-translationally, activated by phosphorylation.

It catalyses the reaction alpha-D-glucosamine 1-phosphate = D-glucosamine 6-phosphate. Functionally, catalyzes the conversion of glucosamine-6-phosphate to glucosamine-1-phosphate. The protein is Phosphoglucosamine mutase of Shewanella sp. (strain ANA-3).